A 217-amino-acid polypeptide reads, in one-letter code: FMN-dependent NADH:quinone oxidoreductase (217 aa).

FMN contacts are provided by residues serine 10, 17-19, and 137-140; these read SAS and SRGG.

The protein belongs to the azoreductase type 1 family. Homodimer. The cofactor is FMN.

The enzyme catalyses 2 a quinone + NADH + H(+) = 2 a 1,4-benzosemiquinone + NAD(+). The catalysed reaction is N,N-dimethyl-1,4-phenylenediamine + anthranilate + 2 NAD(+) = 2-(4-dimethylaminophenyl)diazenylbenzoate + 2 NADH + 2 H(+). In terms of biological role, quinone reductase that provides resistance to thiol-specific stress caused by electrophilic quinones. Its function is as follows. Also exhibits azoreductase activity. Catalyzes the reductive cleavage of the azo bond in aromatic azo compounds to the corresponding amines. This chain is FMN-dependent NADH:quinone oxidoreductase, found in Streptomyces avermitilis (strain ATCC 31267 / DSM 46492 / JCM 5070 / NBRC 14893 / NCIMB 12804 / NRRL 8165 / MA-4680).